The sequence spans 207 residues: Small ribosomal subunit protein uS4 (207 aa).

The segment at 31 to 55 (KCKLDSKPGQHGRTSGARTSDYGTQ) is disordered. A compositionally biased stretch (polar residues) spans 42–53 (GRTSGARTSDYG). Residues 97 to 160 (SRLDNVVYRM…KKQARIVEAL (64 aa)) enclose the S4 RNA-binding domain.

The protein belongs to the universal ribosomal protein uS4 family. As to quaternary structure, part of the 30S ribosomal subunit. Contacts protein S5. The interaction surface between S4 and S5 is involved in control of translational fidelity.

One of the primary rRNA binding proteins, it binds directly to 16S rRNA where it nucleates assembly of the body of the 30S subunit. Its function is as follows. With S5 and S12 plays an important role in translational accuracy. The sequence is that of Small ribosomal subunit protein uS4 from Burkholderia orbicola (strain MC0-3).